The primary structure comprises 263 residues: Endonuclease 8 (263 aa).

Pro2 serves as the catalytic Schiff-base intermediate with DNA. The Proton donor role is filled by Glu3. Residue Lys53 is the Proton donor; for beta-elimination activity of the active site. DNA contacts are provided by Gln70, Arg125, and Asn169. The FPG-type zinc-finger motif lies at 229-263 (KVFHREGESCERCGGTIERTMLSSRPFYWCPHCQS). Catalysis depends on Arg253, which acts as the Proton donor; for delta-elimination activity.

The protein belongs to the FPG family. Zn(2+) serves as cofactor.

The catalysed reaction is 2'-deoxyribonucleotide-(2'-deoxyribose 5'-phosphate)-2'-deoxyribonucleotide-DNA = a 3'-end 2'-deoxyribonucleotide-(2,3-dehydro-2,3-deoxyribose 5'-phosphate)-DNA + a 5'-end 5'-phospho-2'-deoxyribonucleoside-DNA + H(+). In terms of biological role, involved in base excision repair of DNA damaged by oxidation or by mutagenic agents. Acts as a DNA glycosylase that recognizes and removes damaged bases. Has a preference for oxidized pyrimidines, such as thymine glycol, 5,6-dihydrouracil and 5,6-dihydrothymine. Has AP (apurinic/apyrimidinic) lyase activity and introduces nicks in the DNA strand. Cleaves the DNA backbone by beta-delta elimination to generate a single-strand break at the site of the removed base with both 3'- and 5'-phosphates. The protein is Endonuclease 8 of Pectobacterium atrosepticum (strain SCRI 1043 / ATCC BAA-672) (Erwinia carotovora subsp. atroseptica).